The primary structure comprises 380 residues: Erythronate-4-phosphate dehydrogenase (380 aa).

S45 and T66 together coordinate substrate. NAD(+)-binding positions include 126-127, D146, T175, 206-208, and D232; these read QV and ASR. Residue R208 is part of the active site. E237 is an active-site residue. Catalysis depends on H254, which acts as the Proton donor. G257 contacts NAD(+). Y258 contributes to the substrate binding site.

The protein belongs to the D-isomer specific 2-hydroxyacid dehydrogenase family. PdxB subfamily. Homodimer.

The protein resides in the cytoplasm. The catalysed reaction is 4-phospho-D-erythronate + NAD(+) = (R)-3-hydroxy-2-oxo-4-phosphooxybutanoate + NADH + H(+). It participates in cofactor biosynthesis; pyridoxine 5'-phosphate biosynthesis; pyridoxine 5'-phosphate from D-erythrose 4-phosphate: step 2/5. Its function is as follows. Catalyzes the oxidation of erythronate-4-phosphate to 3-hydroxy-2-oxo-4-phosphonooxybutanoate. The polypeptide is Erythronate-4-phosphate dehydrogenase (Pseudomonas paraeruginosa (strain DSM 24068 / PA7) (Pseudomonas aeruginosa (strain PA7))).